Here is a 364-residue protein sequence, read N- to C-terminus: Ribosomal RNA large subunit methyltransferase M (364 aa).

Residues Ser194, Cys227 to Gly230, Asp246, Asp266, and Asp284 each bind S-adenosyl-L-methionine. Lys313 serves as the catalytic Proton acceptor.

The protein belongs to the class I-like SAM-binding methyltransferase superfamily. RNA methyltransferase RlmE family. RlmM subfamily. As to quaternary structure, monomer.

Its subcellular location is the cytoplasm. The enzyme catalyses cytidine(2498) in 23S rRNA + S-adenosyl-L-methionine = 2'-O-methylcytidine(2498) in 23S rRNA + S-adenosyl-L-homocysteine + H(+). Functionally, catalyzes the 2'-O-methylation at nucleotide C2498 in 23S rRNA. This Actinobacillus succinogenes (strain ATCC 55618 / DSM 22257 / CCUG 43843 / 130Z) protein is Ribosomal RNA large subunit methyltransferase M.